The primary structure comprises 553 residues: Putative transport protein YidE (553 aa).

Helical transmembrane passes span 4 to 24 (IALT…IGNV), 28 to 48 (GIGL…HFVS), 65 to 85 (FGLI…FFAS), 95 to 115 (LFAV…HKLF), and 158 to 178 (MSYA…MWML). 2 RCK C-terminal domains span residues 191–276 (QQHE…VIGQ) and 279–361 (DTSL…VLGN). Helical transmembrane passes span 371-391 (MLPV…PVFV), 393-413 (GFPA…ALIL), 439-459 (IVLF…NTLV), 464-484 (LSWI…VGIL), 493-513 (YLTM…LAFA), and 533-553 (LVMF…WSIG).

This sequence belongs to the AAE transporter (TC 2.A.81) family. YidE subfamily.

Its subcellular location is the cell membrane. The polypeptide is Putative transport protein YidE (Shigella flexneri serotype 5b (strain 8401)).